The primary structure comprises 40 residues: Sarcotoxin-1D (40 aa).

The protein belongs to the cecropin family.

The protein localises to the secreted. Its function is as follows. Sarcotoxins, which are potent bactericidal proteins, are produced in response to injury. They are cytotoxic to both Gram-positive and Gram-negative bacteria. The sequence is that of Sarcotoxin-1D from Sarcophaga peregrina (Flesh fly).